Here is a 380-residue protein sequence, read N- to C-terminus: QRFP-like peptide receptor (380 aa).

Topologically, residues 1 to 51 (MMLGNMTFTQTILHELLRQHNMTKNEFIERFGLPPLVYVPELSPGAKTVTL) are extracellular. Residues Asn-5 and Asn-21 are each glycosylated (N-linked (GlcNAc...) asparagine). A helical transmembrane segment spans residues 52 to 72 (VFYVIIFLAALLGNTLVVVVV). The Cytoplasmic portion of the chain corresponds to 73–83 (WKNKVMRTTMN). A helical transmembrane segment spans residues 84–104 (IFICSLAASDLLITIVCIPVT). The Extracellular portion of the chain corresponds to 105–122 (LMQNMLQNWIMGDFMCKL). A disulfide bond links Cys-120 and Cys-203. The chain crosses the membrane as a helical span at residues 123-143 (VPFIQTIAVASSILTLTGIAI). Residues 144–164 (ERYYAIIHPLKVKYLLSKTRA) are Cytoplasmic-facing. A helical transmembrane segment spans residues 165–185 (GIILALVWVVSVGVATPMLFV). At 186 to 216 (HKAEEIHDFLYEQRFVTCQEKWWGQTQQTSY) the chain is on the extracellular side. A helical membrane pass occupies residues 217–237 (TIFNLVVLFIIPLLTMTSLYI). Residues 238–269 (RIAHRLWVQQPVGVTGNFAHGNSVRRKRQAVK) lie on the Cytoplasmic side of the membrane. A helical membrane pass occupies residues 270–290 (MLVVVVLLFAVCWLPYHTVTV). Residues 291 to 305 (MNELTGLRLEEKSAK) are Extracellular-facing. Residues 306–326 (LLIAIVQLIAFSNSFNNPVVY) traverse the membrane as a helical segment. Over 327–380 (AILNENFKKNFMTMLRCRVNRVSPQQVTPNTLQTPLEQSTRSCRLPAGAPNQQI) the chain is Cytoplasmic.

The protein belongs to the G-protein coupled receptor 1 family.

It localises to the cell membrane. In terms of biological role, receptor for QRFP-like peptide. The activity of this receptor is mediated by G proteins which activate a phosphatidyl-inositol-calcium second messenger system. This Branchiostoma floridae (Florida lancelet) protein is QRFP-like peptide receptor.